Consider the following 425-residue polypeptide: Serine--tRNA ligase (425 aa).

L-serine is bound at residue 231–233 (TAE). Residues 262–264 (RTE) and Val-278 each bind ATP. Glu-285 provides a ligand contact to L-serine. Residue 349–352 (EVTS) participates in ATP binding. Thr-384 serves as a coordination point for L-serine.

It belongs to the class-II aminoacyl-tRNA synthetase family. Type-1 seryl-tRNA synthetase subfamily. Homodimer. The tRNA molecule binds across the dimer.

The protein localises to the cytoplasm. The catalysed reaction is tRNA(Ser) + L-serine + ATP = L-seryl-tRNA(Ser) + AMP + diphosphate + H(+). It carries out the reaction tRNA(Sec) + L-serine + ATP = L-seryl-tRNA(Sec) + AMP + diphosphate + H(+). The protein operates within aminoacyl-tRNA biosynthesis; selenocysteinyl-tRNA(Sec) biosynthesis; L-seryl-tRNA(Sec) from L-serine and tRNA(Sec): step 1/1. Catalyzes the attachment of serine to tRNA(Ser). Is also able to aminoacylate tRNA(Sec) with serine, to form the misacylated tRNA L-seryl-tRNA(Sec), which will be further converted into selenocysteinyl-tRNA(Sec). The chain is Serine--tRNA ligase from Dictyoglomus thermophilum (strain ATCC 35947 / DSM 3960 / H-6-12).